An 815-amino-acid polypeptide reads, in one-letter code: Glycogen phosphorylase (815 aa).

K662 bears the N6-(pyridoxal phosphate)lysine mark.

This sequence belongs to the glycogen phosphorylase family. Pyridoxal 5'-phosphate serves as cofactor.

It carries out the reaction [(1-&gt;4)-alpha-D-glucosyl](n) + phosphate = [(1-&gt;4)-alpha-D-glucosyl](n-1) + alpha-D-glucose 1-phosphate. Its function is as follows. Phosphorylase is an important allosteric enzyme in carbohydrate metabolism. Enzymes from different sources differ in their regulatory mechanisms and in their natural substrates. However, all known phosphorylases share catalytic and structural properties. The polypeptide is Glycogen phosphorylase (glgP) (Shigella flexneri).